Reading from the N-terminus, the 599-residue chain is Afamin (599 aa).

The N-terminal stretch at 1–21 (MKLLKLTGFIFFLFFLTESLT) is a signal peptide. 3 consecutive Albumin domains span residues 22 to 210 (LPTQ…IPVT), 211 to 403 (QYLK…KFNE), and 404 to 599 (TTEK…KIGN). The N-linked (GlcNAc...) (complex) asparagine glycan is linked to asparagine 33. Cystine bridges form between cysteine 77-cysteine 86, cysteine 99-cysteine 114, cysteine 113-cysteine 124, cysteine 148-cysteine 193, cysteine 192-cysteine 201, cysteine 224-cysteine 270, cysteine 269-cysteine 277, cysteine 289-cysteine 303, cysteine 302-cysteine 313, cysteine 340-cysteine 385, and cysteine 384-cysteine 393. N-linked (GlcNAc...) (complex) asparagine glycosylation is present at asparagine 109. The binding pocket for hydrophobic ligands stretch occupies residues 215-319 (AFSSYQKHVC…RGQCIINSNK (105 aa)). Asparagine 383 carries N-linked (GlcNAc...) (complex) asparagine; atypical glycosylation. Asparagine 402 carries an N-linked (GlcNAc...) (complex) asparagine glycan. 6 disulfide bridges follow: cysteine 416–cysteine 462, cysteine 461–cysteine 470, cysteine 483–cysteine 499, cysteine 498–cysteine 509, cysteine 536–cysteine 581, and cysteine 580–cysteine 589. Asparagine 488 is a glycosylation site (N-linked (GlcNAc...) asparagine).

It belongs to the ALB/AFP/VDB family. Forms a 1:1 complex with Wnt family members; interacts with WNT1, WNT2B, WNT3, WNT3A, WNT5A, WNT7A, WNT7B, WNT8, WNT9A, WNT9B, WNT10A and WNT10B. N-glycosylated; more than 90% of the glycans are sialylated. As to expression, high level detected in plasma but also in extravascular fluids such as follicular and cerebrospinal fluids (at protein level).

Its subcellular location is the secreted. Its function is as follows. Functions as a carrier for hydrophobic molecules in body fluids. Essential for the solubility and activity of lipidated Wnt family members, including WNT1, WNT2B, WNT3, WNT3A, WNT5A, WNT7A, WNT7B, WNT8, WNT9A, WNT9B, WNT10A and WNT10B. Binds vitamin E. May transport vitamin E in body fluids under conditions where the lipoprotein system is not sufficient. May be involved in the transport of vitamin E across the blood-brain barrier. The sequence is that of Afamin (AFM) from Homo sapiens (Human).